The sequence spans 2561 residues: Squalestatin hexaketide synthase (2561 aa).

The disordered stretch occupies residues 1–77 (MDVSKEEGQR…NGTTNITPEF (77 aa)). Residues 20–74 (NETTNGHTNGYTNGHTNGHTNGTTNATTNGTTNGTMNGTTNGTTNRTTNGTTNIT) show a composition bias toward low complexity. The Ketosynthase family 3 (KS3) domain maps to 83-503 (QVPVAICGIG…GSNTHIIIDS (421 aa)). Catalysis depends on for beta-ketoacyl synthase activity residues C253, H390, and H427. Positions 603-925 (FIFTGQGAQW…LEAIGKLFCF (323 aa)) are malonyl-CoA:ACP transacylase (MAT) domain. The interval 972-1101 (HELLGERSLE…GLVTASVVIS (130 aa)) is N-terminal hotdog fold. The dehydratase (DH) domain stretch occupies residues 972–1253 (HELLGERSLE…RGFKCKRTDE (282 aa)). Residues 972–1257 (HELLGERSLE…CKRTDESFIQ (286 aa)) enclose the PKS/mFAS DH domain. The Proton acceptor; for dehydratase activity role is filled by H1004. The segment at 1112–1257 (TFPRKVDTSR…CKRTDESFIQ (146 aa)) is C-terminal hotdog fold. The active-site Proton donor; for dehydratase activity is D1174. The interval 1421–1599 (SFFQAAGLNK…GFEGAGTVVL (179 aa)) is methyltransferase (CMet) domain. Residues 1826–2146 (GMLNTLHWVG…RGVHMGRIVV (321 aa)) are enoyl reductase (ER) (ER) domain. The tract at residues 2170–2343 (STYLLTGGMG…PASVIDIAAI (174 aa)) is ketoreductase (KR) domain. Positions 2472–2550 (VLFAQEIAKR…SLGRLATKRL (79 aa)) constitute a Carrier domain. S2509 bears the O-(pantetheine 4'-phosphoryl)serine mark.

It participates in secondary metabolite biosynthesis. In terms of biological role, highly reducing polyketide synthase (HR-PKS); part of the gene cluster that mediates the biosynthesis of squalestatin S1 (SQS1, also known as zaragozic acid A), a heavily oxidized fungal polyketide that offers potent cholesterol lowering activity by targeting squalene synthase (SS). SQS1 is composed of a 2,8-dioxobicyclic[3.2.1]octane-3,4,5-tricarboxyclic acid core that is connected to two lipophilic polyketide arms. These initial steps feature the priming of an unusual benzoic acid starter unit onto the highly reducing polyketide synthase pks2, followed by oxaloacetate extension and product release to generate a tricarboxylic acid containing product. The phenylalanine ammonia lyase (PAL) M7 and the acyl-CoA ligase M9 are involved in transforming phenylalanine into benzoyl-CoA. The citrate synthase-like protein R3 is involved in connecting the C-alpha-carbons of the hexaketide chain and oxaloacetate to afford the tricarboxylic acid unit. The potential hydrolytic enzymes, M8 and M10, are in close proximity to pks2 and may participate in product release. On the other side, the tetraketide arm is synthesized by a the squalestatin tetraketide synthase pks1 and enzymatically esterified to the core in the last biosynthetic step, by the acetyltransferase M4. The biosynthesis of the tetraketide must involve 3 rounds of chain extension. After the first and second rounds methyl-transfer occurs, and in all rounds of extension the ketoreductase and dehydratase are active. The enoyl reductase and C-MeT of pks1 are not active in the final round of extension. The acetyltransferase M4 appears to have a broad substrate selectivity for its acyl CoA substrate, allowing the in vitro synthesis of novel squalestatins. The biosynthesis of SQS1 requires several oxidative steps likely performed by oxidoreductases M1, R1 and R2. Finally, in support of the identification of the cluster as being responsible for SQS1 production, the cluster contains a gene encoding a putative squalene synthase (SS) R6, suggesting a likely mechanism for self-resistance. In Phoma sp. (strain ATCC 20986 / MF5453), this protein is Squalestatin hexaketide synthase.